The primary structure comprises 143 residues: Cofilin (143 aa).

In terms of domain architecture, ADF-H spans 5-137 (GVAVSDEALK…AYESVLEKIS (133 aa)).

This sequence belongs to the actin-binding proteins ADF family.

The protein localises to the cytoplasm. Its subcellular location is the cytoskeleton. It localises to the nucleus matrix. Functionally, controls reversibly actin polymerization and depolymerization in a pH-sensitive manner. It has the ability to bind G- and F-actin in a 1:1 ratio of cofilin to actin. Binding to F-actin is regulated by tropomyosin. It is the major component of intranuclear and cytoplasmic actin rods. Required for accumulation of actin at the cell division site via depolymerizing actin at the cell ends. In association with myosin II has a role in the assembly of the contractile ring via severing actin filaments. Involved in the maintenance of the contractile ring once formed. In association with profilin and capping protein, has a role in the mitotic reorganization of the actin cytoskeleton. This Ogataea parapolymorpha (strain ATCC 26012 / BCRC 20466 / JCM 22074 / NRRL Y-7560 / DL-1) (Yeast) protein is Cofilin (COF1).